The following is a 443-amino-acid chain: Proline--tRNA ligase (443 aa).

The protein belongs to the class-II aminoacyl-tRNA synthetase family. ProS type 2 subfamily. As to quaternary structure, homodimer.

Its subcellular location is the cytoplasm. The enzyme catalyses tRNA(Pro) + L-proline + ATP = L-prolyl-tRNA(Pro) + AMP + diphosphate. Functionally, catalyzes the attachment of proline to tRNA(Pro) in a two-step reaction: proline is first activated by ATP to form Pro-AMP and then transferred to the acceptor end of tRNA(Pro). The polypeptide is Proline--tRNA ligase (Zymomonas mobilis subsp. mobilis (strain ATCC 31821 / ZM4 / CP4)).